An 893-amino-acid chain; its full sequence is Pentatricopeptide repeat-containing protein At5g52850, chloroplastic (893 aa).

19 PPR repeats span residues 57-87 (NLDLCNNLLSLYLKTDGIWNARKLFDEMSHR), 88-122 (TVFAWTVMISAFTKSQEFASALSLFEEMMASGTHP), 123-157 (NEFTFSSVVRSCAGLRDISYGGRVHGSVIKTGFEG), 158-188 (NSVVGSSLSDLYSKCGQFKEACELFSSLQNA), 189-223 (DTISWTMMISSLVGARKWREALQFYSEMVKAGVPP), 224-257 (NEFTFVKLLGASSFLGLEFGKTIHSNIIVRGIPL), 258-288 (NVVLKTSLVDFYSQFSKMEDAVRVLNSSGEQ), 289-323 (DVFLWTSVVSGFVRNLRAKEAVGTFLEMRSLGLQP), 324-358 (NNFTYSAILSLCSAVRSLDFGKQIHSQTIKVGFED), 359-390 (STDVGNALVDMYMKCSASEVEASRVFGAMVSP), 391-425 (NVVSWTTLILGLVDHGFVQDCFGLLMEMVKREVEP), 426-460 (NVVTLSGVLRACSKLRHVRRVLEIHAYLLRRHVDG), 461-491 (EMVVGNSLVDAYASSRKVDYAWNVIRSMKRR), 492-526 (DNITYTSLVTRFNELGKHEMALSVINYMYGDGIRM), 527-561 (DQLSLPGFISASANLGALETGKHLHCYSVKSGFSG), 562-592 (AASVLNSLVDMYSKCGSLEDAKKVFEEIATP), 593-627 (DVVSWNGLVSGLASNGFISSALSAFEEMRMKETEP), 628-658 (DSVTFLILLSACSNGRLTDLGLEYFQVMKKI), and 664-694 (QVEHYVHLVGILGRAGRLEEATGVVETMHLK). A type E motif region spans residues 699-774 (IFKTLLRACR…KLGKSTVEVQ (76 aa)). The interval 775 to 806 (GKVHSFVSEDVTRVDKTNGIYAEIESIKEEIK) is type E(+) motif. A type DYW motif region spans residues 807-893 (RFGSPYRGNE…SCKREETSFV (87 aa)).

The protein belongs to the PPR family. PCMP-H subfamily.

The protein localises to the plastid. Its subcellular location is the chloroplast. The chain is Pentatricopeptide repeat-containing protein At5g52850, chloroplastic (PCMP-H31) from Arabidopsis thaliana (Mouse-ear cress).